The following is a 1384-amino-acid chain: MSSLVERLRIRSDRKPVYNLDDSDDDDFVPKKDRTFEQVEAIVRTDAKENACQACGESTNLVSCNTCTYAFHAKCLVPPLKDASVENWRCPECVSPLNEIDKILDCEMRPTKSSEQGSSDAEPKPIFVKQYLVKWKGLSYLHCSWVPEKEFQKAYKSNHRLKTRVNNFHRQMESFNNSEDDFVAIRPEWTTVDRILACREEDGELEYLVKYKELSYDECYWESESDISTFQNEIQRFKDVNSRTRRSKDVDHKRNPRDFQQFDHTPEFLKGLLHPYQLEGLNFLRFSWSKQTHVILADEMGLGKTIQSIALLASLFEENLIPHLVIAPLSTLRNWEREFATWAPQMNVVMYFGTAQARAVIREHEFYLSKDQKKIKKKKSGQISSESKQKRIKFDVLLTSYEMINLDSAVLKPIKWECMIVDEGHRLKNKDSKLFSSLTQYSSNHRILLTGTPLQNNLDELFMLMHFLDAGKFGSLEEFQEEFKDINQEEQISRLHKMLAPHLLRRVKKDVMKDMPPKKELILRVDLSSLQKEYYKAIFTRNYQVLTKKGGAQISLNNIMMELRKVCCHPYMLEGVEPVIHDANEAFKQLLESCGKLQLLDKMMVKLKEQGHRVLIYTQFQHMLDLLEDYCTHKKWQYERIDGKVGGAERQIRIDRFNAKNSNKFCFLLSTRAGGLGINLATADTVIIYDSDWNPHADLQAMARAHRLGQTNKVMIYRLINRGTIEERMMQLTKKKMVLEHLVVGKLKTQNINQEELDDIIRYGSKELFASEDDEAGKSGKIHYDDAAIDKLLDRDLVEAEEVSVDDEEENGFLKAFKVANFEYIDENEAAALEAQRVAAESKSSAGNSDRASYWEELLKDKFELHQAEELNALGKRKRSRKQLVSIEEDDLAGLEDVSSDGDESYEAESTDGEAAGQGVQTGRRPYRRKGRDNLEPTPLMEGEGRSFRVLGFNQSQRAIFVQTLMRYGAGNFDWKEFVPRLKQKTFEEINEYGILFLKHIAEEIDENSPTFSDGVPKEGLRIEDVLVRIALLILVQEKVKFVEDHPGKPVFPSRILERFPGLRSGKIWKEEHDKIMIRAVLKHGYGRWQAIVDDKELGIQELICKELNFPHISLSAAEQAGLQGQNGSGGSNPGAQTNQNPGSVITGNNNASADGAQVNSMFYYRDMQRRLVEFVKKRVLLLEKAMNYEYAEEYYGLGGSSSIPTEEPEAEPKIADTVGVSFIEVDDEMLDGLPKTDPITSEEIMGAAVDNNQARVEIAQHYNQMCKLLDENARESVQAYVNNQPPSTKVNESFRALKSINGNINTILSITSDQSKSHEDDTKPDLNNVEMKDTAEETKPLRGGVVDLNVVEGEENIAEASGSVDVKMEEAKEEEKPKNMVVD.

Phosphoserine is present on Ser-23. The segment at 49–96 (ENACQACGESTNLVSCNTCTYAFHAKCLVPPLKDASVENWRCPECVSP) adopts a PHD-type zinc-finger fold. Chromo domains follow at residues 98–180 (NEID…NSED) and 190–249 (TTVD…RSKD). The Helicase ATP-binding domain occupies 285–471 (RFSWSKQTHV…FMLMHFLDAG (187 aa)). 298-305 (DEMGLGKT) lines the ATP pocket. The Nuclear localization signal motif lies at 376 to 383 (KKKKSGQI). Residues 422 to 425 (DEGH) carry the DEAH box motif. The 162-residue stretch at 599-760 (LLDKMMVKLK…NINQEELDDI (162 aa)) folds into the Helicase C-terminal domain. Residues 893 to 912 (AGLEDVSSDGDESYEAESTD) are compositionally biased toward acidic residues. Disordered regions lie at residues 893-941 (AGLE…TPLM), 1122-1152 (GLQG…NNNA), 1313-1344 (SDQS…PLRG), and 1365-1384 (VDVK…MVVD). Positions 1138-1152 (TNQNPGSVITGNNNA) are enriched in polar residues. 2 stretches are compositionally biased toward basic and acidic residues: residues 1316 to 1341 (SKSH…ETKP) and 1367 to 1384 (VKME…MVVD).

This sequence belongs to the SNF2/RAD54 helicase family. In terms of assembly, interacts with TAF12B. In terms of tissue distribution, mostly expressed in tissue undergoing significant differentiation (meristems and primordia) such as young seedlings, influorescent tissue and young siliques, but not in endosperm and seed coat (at protein level). Levels decrease as organs age. Also present in trichomes.

The protein localises to the nucleus. Chromatin remodeling factor that represses the expression of embryonic trait genes (such as NFYB9/LEC1) upon and after seed germination and thus enables the developmental switch to post-germinative growth. Silences some MADS-box proteins such as PHE1 and PHE2. Plays a role during carpel differentiation. Regulates late processes in cytokinin signaling. The chain is CHD3-type chromatin-remodeling factor PICKLE (PKL) from Arabidopsis thaliana (Mouse-ear cress).